A 268-amino-acid polypeptide reads, in one-letter code: Ribosomal RNA small subunit methyltransferase A (268 aa).

S-adenosyl-L-methionine-binding residues include Asn17, Leu19, Gly44, Glu65, Asp89, and Asn110.

It belongs to the class I-like SAM-binding methyltransferase superfamily. rRNA adenine N(6)-methyltransferase family. RsmA subfamily.

The protein resides in the cytoplasm. It catalyses the reaction adenosine(1518)/adenosine(1519) in 16S rRNA + 4 S-adenosyl-L-methionine = N(6)-dimethyladenosine(1518)/N(6)-dimethyladenosine(1519) in 16S rRNA + 4 S-adenosyl-L-homocysteine + 4 H(+). Functionally, specifically dimethylates two adjacent adenosines (A1518 and A1519) in the loop of a conserved hairpin near the 3'-end of 16S rRNA in the 30S particle. May play a critical role in biogenesis of 30S subunits. This chain is Ribosomal RNA small subunit methyltransferase A, found in Acidithiobacillus ferrooxidans (strain ATCC 53993 / BNL-5-31) (Leptospirillum ferrooxidans (ATCC 53993)).